We begin with the raw amino-acid sequence, 427 residues long: Enolase (427 aa).

Gln163 lines the (2R)-2-phosphoglycerate pocket. The Proton donor role is filled by Glu205. Residues Asp242, Glu285, and Asp312 each contribute to the Mg(2+) site. (2R)-2-phosphoglycerate-binding residues include Lys337, Arg366, Ser367, and Lys388. Lys337 acts as the Proton acceptor in catalysis.

This sequence belongs to the enolase family. Requires Mg(2+) as cofactor.

It localises to the cytoplasm. Its subcellular location is the secreted. The protein localises to the cell surface. It catalyses the reaction (2R)-2-phosphoglycerate = phosphoenolpyruvate + H2O. It functions in the pathway carbohydrate degradation; glycolysis; pyruvate from D-glyceraldehyde 3-phosphate: step 4/5. Catalyzes the reversible conversion of 2-phosphoglycerate (2-PG) into phosphoenolpyruvate (PEP). It is essential for the degradation of carbohydrates via glycolysis. This Nitrosospira multiformis (strain ATCC 25196 / NCIMB 11849 / C 71) protein is Enolase.